Here is a 632-residue protein sequence, read N- to C-terminus: Pescadillo homolog (632 aa).

The disordered stretch occupies residues 306–341 (GDDADVDMDEGAKETDEEEDEDFVERPSKAQEVDDV). The span at 307-328 (DDADVDMDEGAKETDEEEDEDF) shows a compositional bias: acidic residues. Positions 361-459 (RQNLLFSPYT…KIISSEGYGP (99 aa)) constitute a BRCT domain. Disordered regions lie at residues 485–535 (GEKA…QNPS), 565–585 (TKVHAKKVPASQKEKKGEEDL), and 601–632 (MQYSNREKAAEKEKLEKKRKAIEKRKAKEAKA). A compositionally biased stretch (acidic residues) spans 492–516 (QEGEEEEEAAEQDEGESEDEEEDGK). A compositionally biased stretch (low complexity) spans 521–531 (AEYPPALLAAA). 2 stretches are compositionally biased toward basic and acidic residues: residues 576-585 (QKEKKGEEDL) and 605-616 (NREKAAEKEKLE). Residues 595–632 (AKLYEKMQYSNREKAAEKEKLEKKRKAIEKRKAKEAKA) are a coiled coil.

The protein belongs to the pescadillo family. Component of the NOP7 complex, composed of ERB1, NOP7 and YTM1. The complex is held together by ERB1, which interacts with NOP7 via its N-terminal domain and with YTM1 via a high-affinity interaction between the seven-bladed beta-propeller domains of the 2 proteins. The NOP7 complex associates with the 66S pre-ribosome.

The protein resides in the nucleus. Its subcellular location is the nucleolus. It localises to the nucleoplasm. Component of the NOP7 complex, which is required for maturation of the 25S and 5.8S ribosomal RNAs and formation of the 60S ribosome. The chain is Pescadillo homolog from Cryptococcus neoformans var. neoformans serotype D (strain B-3501A) (Filobasidiella neoformans).